We begin with the raw amino-acid sequence, 347 residues long: Mediator of RNA polymerase II transcription subunit 7 (347 aa).

Disordered stretches follow at residues 97-172 and 302-326; these read GIER…TQTH and VPVGARTGTTVGDRRVGVDGEGAEE. Low complexity-rich tracts occupy residues 108–171 and 302–312; these read STTT…STQT and VPVGARTGTTV.

The protein belongs to the Mediator complex subunit 7 family. Component of the Mediator complex.

Its subcellular location is the nucleus. Component of the Mediator complex, a coactivator involved in the regulated transcription of nearly all RNA polymerase II-dependent genes. Mediator functions as a bridge to convey information from gene-specific regulatory proteins to the basal RNA polymerase II transcription machinery. Mediator is recruited to promoters by direct interactions with regulatory proteins and serves as a scaffold for the assembly of a functional preinitiation complex with RNA polymerase II and the general transcription factors. The protein is Mediator of RNA polymerase II transcription subunit 7 (med-7) of Neurospora crassa (strain ATCC 24698 / 74-OR23-1A / CBS 708.71 / DSM 1257 / FGSC 987).